The sequence spans 77 residues: uncharacterized protein (77 aa).

This is an uncharacterized protein from Dictyostelium discoideum (Social amoeba).